Here is a 119-residue protein sequence, read N- to C-terminus: Large ribosomal subunit protein bL17 (119 aa).

It belongs to the bacterial ribosomal protein bL17 family. As to quaternary structure, part of the 50S ribosomal subunit. Contacts protein L32.

In Psychrobacter sp. (strain PRwf-1), this protein is Large ribosomal subunit protein bL17.